A 345-amino-acid chain; its full sequence is D-fructose 1,6-bisphosphatase class 2/sedoheptulose 1,7-bisphosphatase (345 aa).

Residues D33, E57, D97, and E100 each contribute to the Mn(2+) site. Substrate is bound by residues 100–102, Y131, 176–178, and 198–200; these read EGT, RDR, and DGD. E225 contacts Mn(2+).

It belongs to the FBPase class 2 family. In terms of assembly, homotetramer. The cofactor is Mn(2+).

The enzyme catalyses beta-D-fructose 1,6-bisphosphate + H2O = beta-D-fructose 6-phosphate + phosphate. It carries out the reaction D-sedoheptulose 1,7-bisphosphate + H2O = D-sedoheptulose 7-phosphate + phosphate. Its pathway is carbohydrate biosynthesis; Calvin cycle. In terms of biological role, catalyzes the hydrolysis of fructose 1,6-bisphosphate (Fru 1,6-P2) and sedoheptulose 1,7-bisphosphate (Sed 1,7-P2) to fructose 6-phosphate and sedoheptulose 7-phosphate, respectively. This Trichormus variabilis (strain ATCC 29413 / PCC 7937) (Anabaena variabilis) protein is D-fructose 1,6-bisphosphatase class 2/sedoheptulose 1,7-bisphosphatase.